A 362-amino-acid chain; its full sequence is 3-isopropylmalate dehydrogenase (362 aa).

78–91 (GYKWDSLPPHQRPE) provides a ligand contact to NAD(+). Arg-98, Arg-108, Arg-136, and Asp-226 together coordinate substrate. 3 residues coordinate Mg(2+): Asp-226, Asp-250, and Asp-254. NAD(+) is bound at residue 284-296 (GSAPDIAGQDKAN).

It belongs to the isocitrate and isopropylmalate dehydrogenases family. LeuB type 1 subfamily. In terms of assembly, homodimer. Mg(2+) is required as a cofactor. Requires Mn(2+) as cofactor.

The protein localises to the cytoplasm. It catalyses the reaction (2R,3S)-3-isopropylmalate + NAD(+) = 4-methyl-2-oxopentanoate + CO2 + NADH. It functions in the pathway amino-acid biosynthesis; L-leucine biosynthesis; L-leucine from 3-methyl-2-oxobutanoate: step 3/4. In terms of biological role, catalyzes the oxidation of 3-carboxy-2-hydroxy-4-methylpentanoate (3-isopropylmalate) to 3-carboxy-4-methyl-2-oxopentanoate. The product decarboxylates to 4-methyl-2 oxopentanoate. The sequence is that of 3-isopropylmalate dehydrogenase from Nostoc sp. (strain PCC 7120 / SAG 25.82 / UTEX 2576).